The primary structure comprises 259 residues: Ribosomal RNA small subunit methyltransferase J (259 aa).

S-adenosyl-L-methionine contacts are provided by residues 101 to 102, 117 to 118, 153 to 154, and D176; these read RD, ER, and SS.

The protein belongs to the methyltransferase superfamily. RsmJ family.

The protein resides in the cytoplasm. The enzyme catalyses guanosine(1516) in 16S rRNA + S-adenosyl-L-methionine = N(2)-methylguanosine(1516) in 16S rRNA + S-adenosyl-L-homocysteine + H(+). Specifically methylates the guanosine in position 1516 of 16S rRNA. This chain is Ribosomal RNA small subunit methyltransferase J, found in Vibrio campbellii (strain ATCC BAA-1116).